The sequence spans 110 residues: Integration host factor subunit alpha (110 aa).

Belongs to the bacterial histone-like protein family. In terms of assembly, heterodimer of an alpha and a beta chain.

In terms of biological role, this protein is one of the two subunits of integration host factor, a specific DNA-binding protein that functions in genetic recombination as well as in transcriptional and translational control. The protein is Integration host factor subunit alpha of Bdellovibrio bacteriovorus (strain ATCC 15356 / DSM 50701 / NCIMB 9529 / HD100).